Here is a 406-residue protein sequence, read N- to C-terminus: Putative ankyrin repeat protein RF_0266 (406 aa).

ANK repeat units follow at residues 68 to 98, 103 to 129, 130 to 161, 163 to 189, and 203 to 232; these read TSHSTLSLIAVINNDLETLNLLINFGFDINN, NYITPLGLAADKGYKEIVKLLCEQDDI, KVQNALYYAIRGENKSIEIIDLLVQKGAIIKP, HIELAISHSNLSVFEYLFEKKLPDIEK, and SIDCILGEASKYQNTEVIKFLLSSGYKPEQ.

The chain is Putative ankyrin repeat protein RF_0266 from Rickettsia felis (strain ATCC VR-1525 / URRWXCal2) (Rickettsia azadi).